A 462-amino-acid polypeptide reads, in one-letter code: Bifunctional protein HldE (462 aa).

Residues 1–309 (MKPRILVLGD…EYERSIRKAP (309 aa)) form a ribokinase region. 186-189 (NKKE) lines the ATP pocket. Residue Asp254 is part of the active site. Positions 336-462 (FTNGCFDILH…TAIVERMRSC (127 aa)) are cytidylyltransferase.

In the N-terminal section; belongs to the carbohydrate kinase PfkB family. The protein in the C-terminal section; belongs to the cytidylyltransferase family. In terms of assembly, homodimer.

The enzyme catalyses D-glycero-beta-D-manno-heptose 7-phosphate + ATP = D-glycero-beta-D-manno-heptose 1,7-bisphosphate + ADP + H(+). It carries out the reaction D-glycero-beta-D-manno-heptose 1-phosphate + ATP + H(+) = ADP-D-glycero-beta-D-manno-heptose + diphosphate. It participates in nucleotide-sugar biosynthesis; ADP-L-glycero-beta-D-manno-heptose biosynthesis; ADP-L-glycero-beta-D-manno-heptose from D-glycero-beta-D-manno-heptose 7-phosphate: step 1/4. The protein operates within nucleotide-sugar biosynthesis; ADP-L-glycero-beta-D-manno-heptose biosynthesis; ADP-L-glycero-beta-D-manno-heptose from D-glycero-beta-D-manno-heptose 7-phosphate: step 3/4. Its function is as follows. Catalyzes the phosphorylation of D-glycero-D-manno-heptose 7-phosphate at the C-1 position to selectively form D-glycero-beta-D-manno-heptose-1,7-bisphosphate. In terms of biological role, catalyzes the ADP transfer from ATP to D-glycero-beta-D-manno-heptose 1-phosphate, yielding ADP-D-glycero-beta-D-manno-heptose. The protein is Bifunctional protein HldE of Nitratiruptor sp. (strain SB155-2).